Reading from the N-terminus, the 333-residue chain is Large ribosomal subunit protein uL3 (333 aa).

2 stretches are compositionally biased toward basic residues: residues 1 to 10 (MGMKRNRPRR) and 17 to 26 (PRKRAKRPVP). The interval 1–29 (MGMKRNRPRRGSLAFSPRKRAKRPVPKIR) is disordered.

This sequence belongs to the universal ribosomal protein uL3 family. In terms of assembly, part of the 50S ribosomal subunit. Forms a cluster with proteins L14 and L24e.

One of the primary rRNA binding proteins, it binds directly near the 3'-end of the 23S rRNA, where it nucleates assembly of the 50S subunit. In Methanococcus aeolicus (strain ATCC BAA-1280 / DSM 17508 / OCM 812 / Nankai-3), this protein is Large ribosomal subunit protein uL3.